The following is a 53-amino-acid chain: uncharacterized protein (53 aa).

The chain crosses the membrane as a helical span at residues 4–24 (FILLIVGFIYGAGGVLLYSVY).

Its subcellular location is the host membrane. This is an uncharacterized protein from Acidianus bottle-shaped virus (isolate Italy/Pozzuoli) (ABV).